Here is a 301-residue protein sequence, read N- to C-terminus: Probable actin-related protein 2/3 complex subunit 2 (301 aa).

Belongs to the ARPC2 family. As to quaternary structure, component of the Arp2/3 complex, at least composed of arx-1, arx-2, arx-4 and arx-6.

Its subcellular location is the cytoplasm. The protein resides in the cytoskeleton. Functions as actin-binding component of the Arp2/3 complex which is involved in regulation of actin polymerization and together with an activating nucleation-promoting factor (NPF) mediates the formation of branched actin networks. Seems to contact the mother actin filament. Plays a role in time-dependent memory loss and the retention of conditioned behavior over time. This is Probable actin-related protein 2/3 complex subunit 2 from Caenorhabditis elegans.